Consider the following 39-residue polypeptide: Photosystem II reaction center protein L (39 aa).

A helical transmembrane segment spans residues 18-38 (SLYLGLLLVAVLGILFSSYFF).

Belongs to the PsbL family. As to quaternary structure, PSII is composed of 1 copy each of membrane proteins PsbA, PsbB, PsbC, PsbD, PsbE, PsbF, PsbH, PsbI, PsbJ, PsbK, PsbL, PsbM, PsbT, PsbX, PsbY, PsbZ, Psb30/Ycf12, peripheral proteins PsbO, CyanoQ (PsbQ), PsbU, PsbV and a large number of cofactors. It forms dimeric complexes.

It localises to the cellular thylakoid membrane. Its function is as follows. One of the components of the core complex of photosystem II (PSII). PSII is a light-driven water:plastoquinone oxidoreductase that uses light energy to abstract electrons from H(2)O, generating O(2) and a proton gradient subsequently used for ATP formation. It consists of a core antenna complex that captures photons, and an electron transfer chain that converts photonic excitation into a charge separation. This subunit is found at the monomer-monomer interface and is required for correct PSII assembly and/or dimerization. The chain is Photosystem II reaction center protein L from Microcystis aeruginosa (strain NIES-843 / IAM M-2473).